Consider the following 742-residue polypeptide: Phosphoribosylformylglycinamidine synthase subunit PurL (742 aa).

Residue histidine 54 is part of the active site. Residues tyrosine 57 and lysine 96 each contribute to the ATP site. A Mg(2+)-binding site is contributed by glutamate 98. Substrate contacts are provided by residues 99 to 102 and arginine 121; that span reads SHNH. Histidine 100 acts as the Proton acceptor in catalysis. Aspartate 122 is a Mg(2+) binding site. Residue glutamine 245 participates in substrate binding. Aspartate 273 contacts Mg(2+). A substrate-binding site is contributed by 317 to 319; sequence ESQ. Residues aspartate 500 and glycine 537 each coordinate ATP. A Mg(2+)-binding site is contributed by asparagine 538. Residue serine 540 participates in substrate binding.

It belongs to the FGAMS family. As to quaternary structure, monomer. Part of the FGAM synthase complex composed of 1 PurL, 1 PurQ and 2 PurS subunits.

It localises to the cytoplasm. The enzyme catalyses N(2)-formyl-N(1)-(5-phospho-beta-D-ribosyl)glycinamide + L-glutamine + ATP + H2O = 2-formamido-N(1)-(5-O-phospho-beta-D-ribosyl)acetamidine + L-glutamate + ADP + phosphate + H(+). It functions in the pathway purine metabolism; IMP biosynthesis via de novo pathway; 5-amino-1-(5-phospho-D-ribosyl)imidazole from N(2)-formyl-N(1)-(5-phospho-D-ribosyl)glycinamide: step 1/2. Part of the phosphoribosylformylglycinamidine synthase complex involved in the purines biosynthetic pathway. Catalyzes the ATP-dependent conversion of formylglycinamide ribonucleotide (FGAR) and glutamine to yield formylglycinamidine ribonucleotide (FGAM) and glutamate. The FGAM synthase complex is composed of three subunits. PurQ produces an ammonia molecule by converting glutamine to glutamate. PurL transfers the ammonia molecule to FGAR to form FGAM in an ATP-dependent manner. PurS interacts with PurQ and PurL and is thought to assist in the transfer of the ammonia molecule from PurQ to PurL. The sequence is that of Phosphoribosylformylglycinamidine synthase subunit PurL from Geobacillus sp. (strain WCH70).